Reading from the N-terminus, the 198-residue chain is Recombination protein RecR (198 aa).

Residues 57-72 form a C4-type zinc finger; that stretch reads CSLCGNLDTVDPCHIC. One can recognise a Toprim domain in the interval 80 to 175; that stretch reads GLICVVETVG…TVTRVGHGVP (96 aa).

Belongs to the RecR family.

In terms of biological role, may play a role in DNA repair. It seems to be involved in an RecBC-independent recombinational process of DNA repair. It may act with RecF and RecO. This chain is Recombination protein RecR, found in Gluconobacter oxydans (strain 621H) (Gluconobacter suboxydans).